A 241-amino-acid chain; its full sequence is Glutathione S-transferase theta-3 (241 aa).

Positions 2-82 (GLELYLDLMS…YLSRKYKAPD (81 aa)) constitute a GST N-terminal domain. Glutathione is bound by residues 53–54 (KV) and 66–67 (ES). Positions 88 to 222 (DLQTRARVDE…VVLKAKDMPP (135 aa)) constitute a GST C-terminal domain.

Belongs to the GST superfamily. Theta family. Homodimer. In terms of tissue distribution, expressed strongly in liver, and at lower levels in kidney and testis.

The protein resides in the cytoplasm. It carries out the reaction RX + glutathione = an S-substituted glutathione + a halide anion + H(+). Functionally, conjugation of reduced glutathione to a wide number of exogenous and endogenous hydrophobic electrophiles. Shows high activity towards 4-nitrobenzyl chloride (4-NBC). Also has lower activity towards 1,2-epoxy-3-(p-nitrophenoxy)propane (EPNP), cumene hydroperoxide, 1-chloro-2,4-dinitrobenzene (CDNB), 7-chloro-4-nitrobenzo-2-oxa-1,3-diazole (NBD-Cl), and ethacrynic acid. The sequence is that of Glutathione S-transferase theta-3 from Mus musculus (Mouse).